The following is a 130-amino-acid chain: Small ribosomal subunit protein uS17m (130 aa).

The transit peptide at 1–20 (MSVVRSSVHARWIVGKVIGT) directs the protein to the mitochondrion.

This sequence belongs to the universal ribosomal protein uS17 family. Component of the mitochondrial small ribosomal subunit (mt-SSU). Mature mammalian 55S mitochondrial ribosomes consist of a small (28S) and a large (39S) subunit. The 28S small subunit contains a 12S ribosomal RNA (12S mt-rRNA) and 30 different proteins. The 39S large subunit contains a 16S rRNA (16S mt-rRNA), a copy of mitochondrial valine transfer RNA (mt-tRNA(Val)), which plays an integral structural role, and 52 different proteins.

Its subcellular location is the mitochondrion. This is Small ribosomal subunit protein uS17m (MRPS17) from Homo sapiens (Human).